A 95-amino-acid polypeptide reads, in one-letter code: MLHTLSVSPWHADIAAMLRLMEHGDDLVLLSDGVTAAIADGRFLEILQSAPITLYVLQDDVDARGLAGQIADSVGRVSYTDFVRLTVKHAGQLAW.

Belongs to the DsrH/TusB family. As to quaternary structure, heterohexamer, formed by a dimer of trimers. The hexameric TusBCD complex contains 2 copies each of TusB, TusC and TusD. The TusBCD complex interacts with TusE.

The protein resides in the cytoplasm. Part of a sulfur-relay system required for 2-thiolation of 5-methylaminomethyl-2-thiouridine (mnm(5)s(2)U) at tRNA wobble positions. In Klebsiella pneumoniae subsp. pneumoniae (strain ATCC 700721 / MGH 78578), this protein is Protein TusB.